The sequence spans 297 residues: F-box only protein 2 (297 aa).

Residues 1–42 are disordered; it reads MDGDGDPESVGQPEEASPEEQQEEACAEEANGGEERPEDDGE. The span at 16 to 27 shows a compositional bias: acidic residues; sequence ASPEEQQEEACA. The 48-residue stretch at 45 to 92 folds into the F-box domain; it reads AAYLDELPEPLLLRVLAELPAAQLVQACRLVCLRWKELVDGAPLWLLK. Positions 114–297 constitute an FBA domain; it reads FYFLSKRRRN…VTNSSVWVEP (184 aa). Residues 211 to 213 and 279 to 280 contribute to the a carbohydrate site; these read RRD and YW.

Component of the SCF(FBXO2) complex consisting of CUL1, RBX1, SKP1 and FBXO2. Predominantly detected as heterodimer with SKP1; the heterodimer with SKP1 is not part of the SCF(FBXO2) complex.

It localises to the cytoplasm. It is found in the microsome membrane. The protein operates within protein modification; protein ubiquitination. Functionally, substrate recognition component of a SCF (SKP1-CUL1-F-box protein) E3 ubiquitin-protein ligase complex that mediates the ubiquitination and subsequent proteasomal degradation of target proteins. Involved in the endoplasmic reticulum-associated degradation pathway (ERAD) for misfolded lumenal proteins by recognizing and binding sugar chains on unfolded glycoproteins that are retrotranslocated into the cytosol and promoting their ubiquitination and subsequent degradation. Prevents formation of cytosolic aggregates of unfolded glycoproteins that have been retrotranslocated into the cytosol. Able to recognize and bind denatured glycoproteins, preferentially those of the high-mannose type. In Bos taurus (Bovine), this protein is F-box only protein 2 (FBXO2).